A 750-amino-acid chain; its full sequence is DDT domain-containing protein DDR4 (750 aa).

The interval 1-125 (MGSSSDIVPD…ITSLVPPPEP (125 aa)) is disordered. Low complexity predominate over residues 45 to 54 (RAQQRLQELQ). The span at 55–77 (AAERKLKPPKKEYKREQHRRREE) shows a compositional bias: basic and acidic residues. Residues 78–100 (VVEEDEDSEDDDQEDEENDGDDE) are compositionally biased toward acidic residues. The DDT domain occupies 133–192 (LRSMWELASVLNFLHVFRPLLKINAEFSAEEFETALLTPNDTLSDIHIPLLKAIPPVTRM). 2 disordered regions span residues 450–505 (NGRS…TDFV) and 532–750 (LKKR…TDNS). The span at 451 to 471 (GRSTSSTHPTEPVNDTASGRS) shows a compositional bias: polar residues. The span at 545–585 (EGDEEKGDEEYKWDEDNAEYEEEEEEEEEEDSLSASEEDSD) shows a compositional bias: acidic residues. The span at 595–606 (RRETKLRSRSND) shows a compositional bias: basic and acidic residues. The span at 688–707 (NADTTNGKENNQLNKSNGTT) shows a compositional bias: polar residues. Residues 741–750 (LKDDDKTDNS) show a composition bias toward basic and acidic residues.

As to quaternary structure, interacts (via the DDT domain) with CHR11 (via C-terminus).

Its subcellular location is the nucleus. Probable transcription regulator. The polypeptide is DDT domain-containing protein DDR4 (Arabidopsis thaliana (Mouse-ear cress)).